The following is a 142-amino-acid chain: Large ribosomal subunit protein uL13 (142 aa).

It belongs to the universal ribosomal protein uL13 family. As to quaternary structure, part of the 50S ribosomal subunit.

In terms of biological role, this protein is one of the early assembly proteins of the 50S ribosomal subunit, although it is not seen to bind rRNA by itself. It is important during the early stages of 50S assembly. In Hamiltonella defensa subsp. Acyrthosiphon pisum (strain 5AT), this protein is Large ribosomal subunit protein uL13.